The following is a 436-amino-acid chain: C4-dicarboxylate transport protein 2 (436 aa).

9 helical membrane passes run valine 14 to alanine 34, leucine 45 to methionine 65, methionine 77 to valine 97, valine 142 to glycine 162, proline 198 to valine 218, leucine 223 to alanine 243, valine 290 to leucine 310, isoleucine 331 to glycine 351, and isoleucine 353 to isoleucine 373. The interval glutamate 414–valine 436 is disordered.

The protein belongs to the dicarboxylate/amino acid:cation symporter (DAACS) (TC 2.A.23) family.

Its subcellular location is the cell inner membrane. Responsible for the transport of dicarboxylates such as succinate, fumarate, and malate from the periplasm across the membrane. This chain is C4-dicarboxylate transport protein 2, found in Pseudomonas aeruginosa (strain UCBPP-PA14).